A 355-amino-acid polypeptide reads, in one-letter code: UDP-N-acetylglucosamine--N-acetylmuramyl-(pentapeptide) pyrophosphoryl-undecaprenol N-acetylglucosamine transferase (355 aa).

UDP-N-acetyl-alpha-D-glucosamine-binding positions include Thr-15–Gly-17, Asn-127, Arg-163, Ser-191, Ile-244, Ala-263–Glu-268, and Gln-288.

It belongs to the glycosyltransferase 28 family. MurG subfamily.

Its subcellular location is the cell inner membrane. The enzyme catalyses di-trans,octa-cis-undecaprenyl diphospho-N-acetyl-alpha-D-muramoyl-L-alanyl-D-glutamyl-meso-2,6-diaminopimeloyl-D-alanyl-D-alanine + UDP-N-acetyl-alpha-D-glucosamine = di-trans,octa-cis-undecaprenyl diphospho-[N-acetyl-alpha-D-glucosaminyl-(1-&gt;4)]-N-acetyl-alpha-D-muramoyl-L-alanyl-D-glutamyl-meso-2,6-diaminopimeloyl-D-alanyl-D-alanine + UDP + H(+). Its pathway is cell wall biogenesis; peptidoglycan biosynthesis. In terms of biological role, cell wall formation. Catalyzes the transfer of a GlcNAc subunit on undecaprenyl-pyrophosphoryl-MurNAc-pentapeptide (lipid intermediate I) to form undecaprenyl-pyrophosphoryl-MurNAc-(pentapeptide)GlcNAc (lipid intermediate II). In Escherichia coli O139:H28 (strain E24377A / ETEC), this protein is UDP-N-acetylglucosamine--N-acetylmuramyl-(pentapeptide) pyrophosphoryl-undecaprenol N-acetylglucosamine transferase.